A 154-amino-acid polypeptide reads, in one-letter code: Large ribosomal subunit protein uL15 (154 aa).

The disordered stretch occupies residues Met-1–Val-44. The span at Arg-21–Val-35 shows a compositional bias: gly residues.

The protein belongs to the universal ribosomal protein uL15 family. As to quaternary structure, part of the 50S ribosomal subunit.

Binds to the 23S rRNA. This chain is Large ribosomal subunit protein uL15, found in Bartonella quintana (strain Toulouse) (Rochalimaea quintana).